A 93-amino-acid chain; its full sequence is Putative regulatory protein LA_2599 (93 aa).

The protein belongs to the RemA family.

This chain is Putative regulatory protein LA_2599, found in Leptospira interrogans serogroup Icterohaemorrhagiae serovar Lai (strain 56601).